The sequence spans 216 residues: Holliday junction branch migration complex subunit RuvA (216 aa).

A domain I region spans residues M1 to K64. The domain II stretch occupies residues S65–T143. Residues S144–V163 are flexible linker. The domain III stretch occupies residues L164–R216.

Belongs to the RuvA family. In terms of assembly, homotetramer. Forms an RuvA(8)-RuvB(12)-Holliday junction (HJ) complex. HJ DNA is sandwiched between 2 RuvA tetramers; dsDNA enters through RuvA and exits via RuvB. An RuvB hexamer assembles on each DNA strand where it exits the tetramer. Each RuvB hexamer is contacted by two RuvA subunits (via domain III) on 2 adjacent RuvB subunits; this complex drives branch migration. In the full resolvosome a probable DNA-RuvA(4)-RuvB(12)-RuvC(2) complex forms which resolves the HJ.

The protein resides in the cytoplasm. The RuvA-RuvB-RuvC complex processes Holliday junction (HJ) DNA during genetic recombination and DNA repair, while the RuvA-RuvB complex plays an important role in the rescue of blocked DNA replication forks via replication fork reversal (RFR). RuvA specifically binds to HJ cruciform DNA, conferring on it an open structure. The RuvB hexamer acts as an ATP-dependent pump, pulling dsDNA into and through the RuvAB complex. HJ branch migration allows RuvC to scan DNA until it finds its consensus sequence, where it cleaves and resolves the cruciform DNA. This chain is Holliday junction branch migration complex subunit RuvA, found in Francisella tularensis subsp. tularensis (strain WY96-3418).